Consider the following 615-residue polypeptide: Sodium-dependent neutral amino acid transporter B(0)AT3 (615 aa).

The Cytoplasmic portion of the chain corresponds to methionine 1–tyrosine 26. The chain crosses the membrane as a helical span at residues leucine 27–cysteine 47. The Extracellular segment spans residues histidine 48–glycine 52. The chain crosses the membrane as a helical span at residues glycine 53–isoleucine 73. At glutamate 74–serine 105 the chain is on the cytoplasmic side. The chain crosses the membrane as a helical span at residues valine 106–leucine 126. Residues asparagine 127–threonine 177 are Extracellular-facing. Asparagine 143 and asparagine 167 each carry an N-linked (GlcNAc...) asparagine glycan. Residues isoleucine 178–isoleucine 198 traverse the membrane as a helical segment. The Cytoplasmic portion of the chain corresponds to arginine 199 to lysine 206. Residues valine 207–leucine 227 traverse the membrane as a helical segment. The Extracellular segment spans residues threonine 228–aspartate 255. A helical membrane pass occupies residues alanine 256–serine 276. The Cytoplasmic portion of the chain corresponds to tyrosine 277–threonine 290. The helical transmembrane segment at isoleucine 291–glycine 311 threads the bilayer. The Extracellular segment spans residues phenylalanine 312–glycine 397. The N-linked (GlcNAc...) asparagine glycan is linked to asparagine 353. A helical membrane pass occupies residues alanine 398–phenylalanine 418. Topologically, residues glycine 419–threonine 442 are cytoplasmic. The chain crosses the membrane as a helical span at residues methionine 443–glycine 463. Topologically, residues serine 464–serine 472 are extracellular. A helical membrane pass occupies residues phenylalanine 473–valine 493. Residues tyrosine 494–arginine 520 lie on the Cytoplasmic side of the membrane. The chain crosses the membrane as a helical span at residues valine 521–serine 541. Over serine 542–cysteine 571 the chain is Extracellular. Residues valine 572–phenylalanine 592 traverse the membrane as a helical segment. The Cytoplasmic segment spans residues glutamine 593–cysteine 615.

It belongs to the sodium:neurotransmitter symporter (SNF) (TC 2.A.22) family. SLC6A18 subfamily. Interacts with CLTRN; this interaction regulates the trafficking of SLC6A18 to the cell membrane and its activity. As to expression, kidney-specific expression.

It localises to the apical cell membrane. The protein localises to the cell membrane. The catalysed reaction is L-alanine(out) + chloride(out) + 2 Na(+)(out) = L-alanine(in) + chloride(in) + 2 Na(+)(in). The enzyme catalyses glycine(out) + chloride(out) + 2 Na(+)(out) = glycine(in) + chloride(in) + 2 Na(+)(in). It catalyses the reaction L-methionine(out) + chloride(out) + 2 Na(+)(out) = L-methionine(in) + chloride(in) + 2 Na(+)(in). It carries out the reaction L-valine(out) + chloride(out) + 2 Na(+)(out) = L-valine(in) + chloride(in) + 2 Na(+)(in). The catalysed reaction is L-isoleucine(out) + chloride(out) + 2 Na(+)(out) = L-isoleucine(in) + chloride(in) + 2 Na(+)(in). The enzyme catalyses L-serine(out) + chloride(out) + 2 Na(+)(out) = L-serine(in) + chloride(in) + 2 Na(+)(in). It catalyses the reaction L-leucine(out) + chloride(out) + 2 Na(+)(out) = L-leucine(in) + chloride(in) + 2 Na(+)(in). Functionally, symporter that transports one amino acid molecule together with two sodium and one chloride ions in kidneys and plays a role in the neutral amino acids reabsorption. Preferentially transports neutral amino acids such as L-glycine and L-alanine but also other neutral amino acids. Required CLTRN for cell surface expression and for its amino acid transporter activity. The transport mechanism is pH-independent. This chain is Sodium-dependent neutral amino acid transporter B(0)AT3, found in Rattus norvegicus (Rat).